Reading from the N-terminus, the 260-residue chain is Indole-3-glycerol phosphate synthase (260 aa).

Belongs to the TrpC family.

The catalysed reaction is 1-(2-carboxyphenylamino)-1-deoxy-D-ribulose 5-phosphate + H(+) = (1S,2R)-1-C-(indol-3-yl)glycerol 3-phosphate + CO2 + H2O. Its pathway is amino-acid biosynthesis; L-tryptophan biosynthesis; L-tryptophan from chorismate: step 4/5. This chain is Indole-3-glycerol phosphate synthase, found in Desulfotalea psychrophila (strain LSv54 / DSM 12343).